The following is a 906-amino-acid chain: Ectonucleotide pyrophosphatase/phosphodiesterase family member 1 (906 aa).

Residues 1–22 are disordered; the sequence is MERDGDQAGHGPRHGSAGNGRE. Over 1–58 the chain is Cytoplasmic; it reads MERDGDQAGHGPRHGSAGNGRELESPAAASLLAPMDLGEEPLEKAERARPAKDPNTYK. Serine 25 carries the phosphoserine modification. The Di-leucine motif motif lies at 27–34; the sequence is AAASLLAP. The chain crosses the membrane as a helical; Signal-anchor for type II membrane protein span at residues 59-79; the sequence is VLSLVLSVCVLTTILGCIFGL. Over 80 to 906 the chain is Extracellular; the sequence is KPSCAKEVKS…THLPIFSQED (827 aa). SMB domains lie at 86–126 and 127–171; these read EVKS…VEPT and HIWT…DKKS. 10 disulfide bridges follow: cysteine 90–cysteine 104, cysteine 94–cysteine 122, cysteine 102–cysteine 115, cysteine 108–cysteine 114, cysteine 131–cysteine 148, cysteine 136–cysteine 166, cysteine 146–cysteine 159, cysteine 152–cysteine 158, cysteine 177–cysteine 223, and cysteine 185–cysteine 397. Residue asparagine 161 is glycosylated (N-linked (GlcNAc...) asparagine). Residues 173–573 are phosphodiesterase; the sequence is VEETCESIDT…APNNGSHGSL (401 aa). Residues aspartate 200, threonine 238, and asparagine 259 each coordinate AMP. Zn(2+) is bound by residues aspartate 200 and threonine 238. The AMP-threonine intermediate role is filled by threonine 238. CMP-binding residues include threonine 238 and asparagine 259. 2 residues coordinate dTMP: threonine 238 and asparagine 259. 2 residues coordinate GMP: threonine 238 and asparagine 259. Threonine 238 carries the phosphothreonine modification. N-linked (GlcNAc...) asparagine glycosylation occurs at asparagine 267. GMP contacts are provided by leucine 272, lysine 277, and tyrosine 322. The AMP site is built by lysine 277 and tyrosine 322. Residues lysine 277 and tyrosine 322 each contribute to the CMP site. Tyrosine 322 is a binding site for dTMP. N-linked (GlcNAc...) asparagine glycosylation occurs at asparagine 323. Aspartate 358 is an AMP binding site. 4 residues coordinate Zn(2+): aspartate 358, histidine 362, aspartate 405, and histidine 406. Residue aspartate 358 coordinates CMP. Aspartate 358 contacts dTMP. Aspartate 358 serves as a coordination point for GMP. Histidine 362 provides a ligand contact to 2',3'-cGAMP. Histidine 406 is a binding site for AMP. Histidine 406 is a binding site for CMP. Residue histidine 406 participates in dTMP binding. Histidine 406 serves as a coordination point for GMP. Intrachain disulfides connect cysteine 413/cysteine 512, cysteine 462/cysteine 849, cysteine 596/cysteine 653, cysteine 607/cysteine 707, cysteine 609/cysteine 692, and cysteine 819/cysteine 829. The N-linked (GlcNAc...) asparagine glycan is linked to asparagine 459. Serine 514 serves as a coordination point for 2',3'-cGAMP. Histidine 517 lines the AMP pocket. Position 517 (histidine 517) interacts with Zn(2+). Histidine 517 is a binding site for CMP. Histidine 517 is a binding site for dTMP. Residue histidine 517 coordinates GMP. 2 N-linked (GlcNAc...) asparagine glycosylation sites follow: asparagine 567 and asparagine 624. The segment at 579 to 628 is linker; the sequence is KPIYNPSHPKEEGFLSQCPIKSTSNDLGCTCDPWIVPIKDFEKQLNLTTE. The interval 635–906 is nuclease-like domain; the sequence is HMTVPYGRPR…THLPIFSQED (272 aa). 5 residues coordinate Ca(2+): aspartate 781, aspartate 783, aspartate 785, arginine 787, and aspartate 789.

It belongs to the nucleotide pyrophosphatase/phosphodiesterase family. In terms of assembly, ectonucleotide pyrophosphatase/phosphodiesterase family member 1: Homodimer. Ectonucleotide pyrophosphatase/phosphodiesterase family member 1: Interacts with INSR; leading to inhibit INSR autophosphorylation and subsequent activation of INSR kinase activity. Ectonucleotide pyrophosphatase/phosphodiesterase family member 1, secreted form: Monomeric. Zn(2+) is required as a cofactor. N-glycosylated. In terms of processing, the secreted form is produced through cleavage at Lys-85 by intracellular processing. As to expression, selectively expressed on the surface of antibody-secreting cells. Expressed in osteocytes and osteoclasts.

Its subcellular location is the cell membrane. The protein resides in the basolateral cell membrane. The protein localises to the secreted. The catalysed reaction is Hydrolytically removes 5'-nucleotides successively from the 3'-hydroxy termini of 3'-hydroxy-terminated oligonucleotides.. It catalyses the reaction a ribonucleoside 5'-triphosphate + H2O = a ribonucleoside 5'-phosphate + diphosphate + H(+). It carries out the reaction ATP + H2O = AMP + diphosphate + H(+). The enzyme catalyses UTP + H2O = UMP + diphosphate + H(+). The catalysed reaction is GTP + H2O = GMP + diphosphate + H(+). It catalyses the reaction CTP + H2O = CMP + diphosphate + H(+). It carries out the reaction 2',3'-cGAMP + 2 H2O = GMP + AMP + 2 H(+). The enzyme catalyses P(1),P(4)-bis(5'-adenosyl) tetraphosphate + H2O = AMP + ATP + 2 H(+). The catalysed reaction is 3',5'-cyclic AMP + H2O = AMP + H(+). At low concentrations of ATP, a phosphorylated intermediate is formed which inhibits further hydrolysis. Its function is as follows. Nucleotide pyrophosphatase that generates diphosphate (PPi) and functions in bone mineralization and soft tissue calcification by regulating pyrophosphate levels. PPi inhibits bone mineralization and soft tissue calcification by binding to nascent hydroxyapatite crystals, thereby preventing further growth of these crystals. Preferentially hydrolyzes ATP, but can also hydrolyze other nucleoside 5' triphosphates such as GTP, CTP and UTP to their corresponding monophosphates with release of pyrophosphate, as well as diadenosine polyphosphates, and also 3',5'-cAMP to AMP. May also be involved in the regulation of the availability of nucleotide sugars in the endoplasmic reticulum and Golgi, and the regulation of purinergic signaling. Inhibits ectopic joint calcification and maintains articular chondrocytes by repressing hedgehog signaling; it is however unclear whether hedgehog inhibition is direct or indirect. Appears to modulate insulin sensitivity. Also involved in melanogenesis. Also able to hydrolyze 2',3'-cGAMP (cyclic GMP-AMP), a second messenger that activates TMEM173/STING and triggers type-I interferon production. 2',3'-cGAMP degradation takes place in the lumen or extracellular space, and not in the cytosol where it is produced; the role of 2',3'-cGAMP hydrolysis is therefore unclear. Not able to hydrolyze the 2',3'-cGAMP linkage isomer 3',3'-cGAMP. The sequence is that of Ectonucleotide pyrophosphatase/phosphodiesterase family member 1 from Mus musculus (Mouse).